Consider the following 323-residue polypeptide: Penicillopepsin-1 (323 aa).

S3 carries O-linked (Man...) serine glycosylation. A glycan (O-linked (Man...) threonine) is linked at T7. Residues 17-320 (YITPVTIGGT…DSDGPQLGFA (304 aa)) enclose the Peptidase A1 domain. Catalysis depends on residues D33 and D213. An intrachain disulfide couples C249 to C283.

This sequence belongs to the peptidase A1 family. In terms of assembly, monomer.

It is found in the secreted. The catalysed reaction is Hydrolysis of proteins with broad specificity similar to that of pepsin A, preferring hydrophobic residues at P1 and P1', but also cleaving 20-Gly-|-Glu-21 in the B chain of insulin. Clots milk, and activates trypsinogen.. Secreted aspartic endopeptidase that allows assimilation of proteinaceous substrates. The scissile peptide bond is attacked by a nucleophilic water molecule activated by two aspartic residues in the active site. Shows a broad primary substrate specificity. Favors hydrophobic residues at the P1 and P1' positions, but can also activate trypsinogen and hydrolyze the B chain of insulin between positions 'Gly-20' and 'Glu-21'. The sequence is that of Penicillopepsin-1 from Penicillium janthinellum (Penicillium vitale).